We begin with the raw amino-acid sequence, 230 residues long: Cytochrome c oxidase subunit 2 (230 aa).

Over 1 to 14 (MAHPTQLGFQDAAS) the chain is Mitochondrial intermembrane. Residues 15–45 (PVMEELLHFHDHALMIVFLISTLVLYIIIAM) traverse the membrane as a helical segment. Residues 46 to 59 (VSTKLTNKYILDSQ) lie on the Mitochondrial matrix side of the membrane. The helical transmembrane segment at 60 to 87 (EIEIVWTILPAVILVLIALPSLRILYLM) threads the bilayer. Residues 88–230 (DEINDPHLTI…NWSSLMLEDA (143 aa)) are Mitochondrial intermembrane-facing. Cu cation contacts are provided by His-161, Cys-196, Glu-198, Cys-200, His-204, and Met-207. Residue Glu-198 participates in Mg(2+) binding.

The protein belongs to the cytochrome c oxidase subunit 2 family. As to quaternary structure, component of the cytochrome c oxidase (complex IV, CIV), a multisubunit enzyme composed of 14 subunits. The complex is composed of a catalytic core of 3 subunits MT-CO1, MT-CO2 and MT-CO3, encoded in the mitochondrial DNA, and 11 supernumerary subunits COX4I, COX5A, COX5B, COX6A, COX6B, COX6C, COX7A, COX7B, COX7C, COX8 and NDUFA4, which are encoded in the nuclear genome. The complex exists as a monomer or a dimer and forms supercomplexes (SCs) in the inner mitochondrial membrane with NADH-ubiquinone oxidoreductase (complex I, CI) and ubiquinol-cytochrome c oxidoreductase (cytochrome b-c1 complex, complex III, CIII), resulting in different assemblies (supercomplex SCI(1)III(2)IV(1) and megacomplex MCI(2)III(2)IV(2)). Found in a complex with TMEM177, COA6, COX18, COX20, SCO1 and SCO2. Interacts with TMEM177 in a COX20-dependent manner. Interacts with COX20. Interacts with COX16. It depends on Cu cation as a cofactor.

It localises to the mitochondrion inner membrane. The catalysed reaction is 4 Fe(II)-[cytochrome c] + O2 + 8 H(+)(in) = 4 Fe(III)-[cytochrome c] + 2 H2O + 4 H(+)(out). In terms of biological role, component of the cytochrome c oxidase, the last enzyme in the mitochondrial electron transport chain which drives oxidative phosphorylation. The respiratory chain contains 3 multisubunit complexes succinate dehydrogenase (complex II, CII), ubiquinol-cytochrome c oxidoreductase (cytochrome b-c1 complex, complex III, CIII) and cytochrome c oxidase (complex IV, CIV), that cooperate to transfer electrons derived from NADH and succinate to molecular oxygen, creating an electrochemical gradient over the inner membrane that drives transmembrane transport and the ATP synthase. Cytochrome c oxidase is the component of the respiratory chain that catalyzes the reduction of oxygen to water. Electrons originating from reduced cytochrome c in the intermembrane space (IMS) are transferred via the dinuclear copper A center (CU(A)) of subunit 2 and heme A of subunit 1 to the active site in subunit 1, a binuclear center (BNC) formed by heme A3 and copper B (CU(B)). The BNC reduces molecular oxygen to 2 water molecules using 4 electrons from cytochrome c in the IMS and 4 protons from the mitochondrial matrix. This Carassius auratus (Goldfish) protein is Cytochrome c oxidase subunit 2 (mt-co2).